A 582-amino-acid chain; its full sequence is ATP-dependent lipid A-core flippase (582 aa).

The next 6 helical transmembrane spans lie at 23–43 (AAFI…TLFL), 61–81 (ILLY…SLNV), 140–160 (AVLV…LMFY), 163–183 (WQLS…VGVV), 247–267 (AIST…VLVI), and 273–293 (MLGE…IMLL). The 283-residue stretch at 26-308 (IAAILCMIGY…LTNVNSDFQR (283 aa)) folds into the ABC transmembrane type-1 domain. The 237-residue stretch at 340-576 (IVFDDVTFSY…EGAYFQLHNL (237 aa)) folds into the ABC transporter domain. 374–381 (GRSGSGKS) contributes to the ATP binding site.

This sequence belongs to the ABC transporter superfamily. Lipid exporter (TC 3.A.1.106) family. Homodimer.

It localises to the cell inner membrane. It catalyses the reaction ATP + H2O + lipid A-core oligosaccharideSide 1 = ADP + phosphate + lipid A-core oligosaccharideSide 2.. In terms of biological role, involved in lipopolysaccharide (LPS) biosynthesis. Translocates lipid A-core from the inner to the outer leaflet of the inner membrane. Transmembrane domains (TMD) form a pore in the inner membrane and the ATP-binding domain (NBD) is responsible for energy generation. The polypeptide is ATP-dependent lipid A-core flippase (Idiomarina loihiensis (strain ATCC BAA-735 / DSM 15497 / L2-TR)).